The sequence spans 99 residues: A-type ATP synthase subunit F (99 aa).

It belongs to the V-ATPase F subunit family. As to quaternary structure, has multiple subunits with at least A(3), B(3), C, D, E, F, H, I and proteolipid K(x).

The protein resides in the cell membrane. Component of the A-type ATP synthase that produces ATP from ADP in the presence of a proton gradient across the membrane. The sequence is that of A-type ATP synthase subunit F from Methanococcoides burtonii (strain DSM 6242 / NBRC 107633 / OCM 468 / ACE-M).